The following is a 349-amino-acid chain: Succinylglutamate desuccinylase (349 aa).

Zn(2+) contacts are provided by histidine 70, glutamate 73, and histidine 166. Glutamate 229 is an active-site residue.

Belongs to the AspA/AstE family. Succinylglutamate desuccinylase subfamily. Zn(2+) is required as a cofactor.

It catalyses the reaction N-succinyl-L-glutamate + H2O = L-glutamate + succinate. It participates in amino-acid degradation; L-arginine degradation via AST pathway; L-glutamate and succinate from L-arginine: step 5/5. Functionally, transforms N(2)-succinylglutamate into succinate and glutamate. The sequence is that of Succinylglutamate desuccinylase from Burkholderia thailandensis (strain ATCC 700388 / DSM 13276 / CCUG 48851 / CIP 106301 / E264).